The sequence spans 329 residues: Cathepsin K (329 aa).

The signal sequence occupies residues Met1–Ala15. The propeptide at Leu16–Arg114 is activation peptide. The N-linked (GlcNAc...) asparagine glycan is linked to Asn103. 2 cysteine pairs are disulfide-bonded: Cys136/Cys177 and Cys170/Cys210. The active site involves Cys139. Asn268 is a glycosylation site (N-linked (GlcNAc...) asparagine). The cysteines at positions 269 and 318 are disulfide-linked. Catalysis depends on residues His276 and Asn296.

Belongs to the peptidase C1 family. In terms of tissue distribution, predominantly expressed in osteclasts (bones).

Its subcellular location is the lysosome. It is found in the secreted. The protein localises to the apical cell membrane. The catalysed reaction is Broad proteolytic activity. With small-molecule substrates and inhibitors, the major determinant of specificity is P2, which is preferably Leu, Met &gt; Phe, and not Arg.. Thiol protease involved in osteoclastic bone resorption and may participate partially in the disorder of bone remodeling. Displays potent endoprotease activity against fibrinogen at acid pH. May play an important role in extracellular matrix degradation. Involved in the release of thyroid hormone thyroxine (T4) by limited proteolysis of TG/thyroglobulin in the thyroid follicle lumen. The polypeptide is Cathepsin K (CTSK) (Oryctolagus cuniculus (Rabbit)).